Consider the following 131-residue polypeptide: D-ribose pyranase (131 aa).

His20 serves as the catalytic Proton donor. Residues Asp28, His98, and 120-122 (YAN) contribute to the substrate site.

It belongs to the RbsD / FucU family. RbsD subfamily. In terms of assembly, homodecamer.

The protein resides in the cytoplasm. It carries out the reaction beta-D-ribopyranose = beta-D-ribofuranose. It participates in carbohydrate metabolism; D-ribose degradation; D-ribose 5-phosphate from beta-D-ribopyranose: step 1/2. Catalyzes the interconversion of beta-pyran and beta-furan forms of D-ribose. This is D-ribose pyranase from Clostridium tetani (strain Massachusetts / E88).